Reading from the N-terminus, the 506-residue chain is Galactose/methyl galactoside import ATP-binding protein MglA (506 aa).

ABC transporter domains lie at 14–249 (LEMR…VGRS) and 259–506 (NKPG…SLHL). An ATP-binding site is contributed by 46–53 (GENGAGKS).

This sequence belongs to the ABC transporter superfamily. Galactose/methyl galactoside importer (TC 3.A.1.2.3) family. The complex is composed of one ATP-binding protein (MglA), two transmembrane proteins (MglC) and a solute-binding protein (MglB).

The protein localises to the cell inner membrane. It catalyses the reaction D-galactose(out) + ATP + H2O = D-galactose(in) + ADP + phosphate + H(+). The enzyme catalyses methyl beta-D-galactoside(out) + ATP + H2O = methyl beta-D-galactoside(in) + ADP + phosphate + H(+). With respect to regulation, stimulated 3-fold by galactose and inhibited by vanadate, N-ethylmaleimide, and 5-methoxyindole-2-carboxylic acid. Part of the ABC transporter complex MglABC involved in galactose/methyl galactoside import. Responsible for energy coupling to the transport system. The sequence is that of Galactose/methyl galactoside import ATP-binding protein MglA from Salmonella typhimurium (strain LT2 / SGSC1412 / ATCC 700720).